The following is a 218-amino-acid chain: Outer-membrane lipoprotein LolB (218 aa).

The N-terminal stretch at 1–24 (MNNLSYLTKIPLIWVLLSVTLLSA) is a signal peptide. Residue cysteine 25 is the site of N-palmitoyl cysteine attachment. The S-diacylglycerol cysteine moiety is linked to residue cysteine 25.

It belongs to the LolB family. In terms of assembly, monomer.

The protein resides in the cell outer membrane. In terms of biological role, plays a critical role in the incorporation of lipoproteins in the outer membrane after they are released by the LolA protein. The protein is Outer-membrane lipoprotein LolB of Shewanella sediminis (strain HAW-EB3).